Here is a 634-residue protein sequence, read N- to C-terminus: DNA-directed RNA polymerase subunit gamma (634 aa).

Zn(2+) contacts are provided by cysteine 74, cysteine 76, cysteine 89, and cysteine 92. Mg(2+)-binding residues include aspartate 471, aspartate 473, and aspartate 475.

Belongs to the RNA polymerase beta' chain family. RpoC1 subfamily. In terms of assembly, in cyanobacteria the RNAP catalytic core is composed of 2 alpha, 1 beta, 1 beta', 1 gamma and 1 omega subunit. When a sigma factor is associated with the core the holoenzyme is formed, which can initiate transcription. Mg(2+) serves as cofactor. Requires Zn(2+) as cofactor.

The enzyme catalyses RNA(n) + a ribonucleoside 5'-triphosphate = RNA(n+1) + diphosphate. In terms of biological role, DNA-dependent RNA polymerase catalyzes the transcription of DNA into RNA using the four ribonucleoside triphosphates as substrates. The polypeptide is DNA-directed RNA polymerase subunit gamma (Prochlorococcus marinus (strain MIT 9515)).